Consider the following 443-residue polypeptide: Crh-like protein 2 (443 aa).

An N-terminal signal peptide occupies residues 1–20; the sequence is MVRIGSSLLLATLAATTVSA. One can recognise a GH16 domain in the interval 21–306; the sequence is ASDPPKCSQD…TVECYDPPSG (286 aa). A disulfide bridge links Cys-56 with Cys-67. Glu-164 acts as the Nucleophile in catalysis. Glu-168 (proton donor) is an active-site residue. A chitin-binding site is contributed by Glu-168. Asn-194 and Asn-237 each carry an N-linked (GlcNAc...) asparagine glycan. Chitin-binding residues include Trp-257 and Thr-268. Asn-332 and Asn-359 each carry an N-linked (GlcNAc...) asparagine glycan. Composition is skewed to low complexity over residues 350 to 367 and 378 to 410; these read ASSS…SANT and EPGN…SETS. The disordered stretch occupies residues 350-420; the sequence is ASSSASGSAN…ASSNKNAAPS (71 aa). The span at 411–420 shows a compositional bias: polar residues; the sequence is ASSNKNAAPS. A lipid anchor (GPI-like-anchor amidated asparagine) is attached at Asn-416. The propeptide at 417 to 443 is removed in mature form; that stretch reads AAPSQNERVLNGSFFAVLVAVVALVTL. N-linked (GlcNAc...) asparagine glycosylation is present at Asn-427.

It belongs to the glycosyl hydrolase 16 family. CRH1 subfamily. The GPI-like anchor contains a phosphoceramide lipid group. The anchor position has not been determined.

Its subcellular location is the cell membrane. It is found in the secreted. It localises to the cell wall. The catalysed reaction is Random endo-hydrolysis of N-acetyl-beta-D-glucosaminide (1-&gt;4)-beta-linkages in chitin and chitodextrins.. In terms of biological role, dual chitinase/transglycosylase that plays a role in cell wall architecture. Chitinase and transglycosylase activities are coupled. Required for the polysaccharide cross-linking at the septa and the cell wall. More specifically, transfers chitin to 1,6-beta-glucan in the cell wall. In Aspergillus fumigatus (strain ATCC MYA-4609 / CBS 101355 / FGSC A1100 / Af293) (Neosartorya fumigata), this protein is Crh-like protein 2.